Here is a 143-residue protein sequence, read N- to C-terminus: UPF0299 membrane protein CGSHiEE_04225 (143 aa).

4 helical membrane-spanning segments follow: residues 1 to 21, 33 to 52, 60 to 80, and 92 to 112; these read MIQK…MLSL, VPGS…TRVI, GASL…VGII, and ILLV…GFLG.

This sequence belongs to the UPF0299 family.

It localises to the cell inner membrane. This Haemophilus influenzae (strain PittEE) protein is UPF0299 membrane protein CGSHiEE_04225.